The sequence spans 314 residues: Oxalate oxidoreductase subunit beta (314 aa).

C24, C27, C52, and C225 together coordinate [4Fe-4S] cluster.

In terms of assembly, dimer of heterotrimer of one alpha, one beta and one delta subunit. It depends on [4Fe-4S] cluster as a cofactor.

It catalyses the reaction oxidized 2[4Fe-4S]-[ferredoxin] + oxalate = reduced 2[4Fe-4S]-[ferredoxin] + 2 CO2. In terms of biological role, catalyzes the anaerobic oxidation of oxalate using a broad range of electron acceptors, including ferredoxin and the nickel-dependent carbon monoxide dehydrogenase. Does not require coenzyme A as cosubstrate. Enables anaerobic growth on oxalate which is used as energy source by the bacteria. This is Oxalate oxidoreductase subunit beta from Moorella thermoacetica (strain ATCC 39073 / JCM 9320).